Consider the following 267-residue polypeptide: Energy-coupling factor transporter transmembrane protein EcfT (267 aa).

5 helical membrane passes run Ile26 to Leu46, Ile73 to Ile93, Leu116 to Thr136, Val151 to Leu171, and Leu247 to Phe267.

This sequence belongs to the energy-coupling factor EcfT family. In terms of assembly, forms a stable energy-coupling factor (ECF) transporter complex composed of 2 membrane-embedded substrate-binding proteins (S component), 2 ATP-binding proteins (A component) and 2 transmembrane proteins (T component). May be able to interact with more than 1 S component at a time.

The protein resides in the cell membrane. Its function is as follows. Transmembrane (T) component of an energy-coupling factor (ECF) ABC-transporter complex. Unlike classic ABC transporters this ECF transporter provides the energy necessary to transport a number of different substrates. This Ruminiclostridium cellulolyticum (strain ATCC 35319 / DSM 5812 / JCM 6584 / H10) (Clostridium cellulolyticum) protein is Energy-coupling factor transporter transmembrane protein EcfT.